Here is a 397-residue protein sequence, read N- to C-terminus: Argininosuccinate synthase (397 aa).

Position 8–16 (8–16 (AYSGGLDTS)) interacts with ATP. Y86 and S91 together coordinate L-citrulline. Position 116 (G116) interacts with ATP. 3 residues coordinate L-aspartate: T118, N122, and D123. N122 contributes to the L-citrulline binding site. Positions 126, 175, 184, 260, and 272 each coordinate L-citrulline.

The protein belongs to the argininosuccinate synthase family. Type 1 subfamily. As to quaternary structure, homotetramer.

It localises to the cytoplasm. It catalyses the reaction L-citrulline + L-aspartate + ATP = 2-(N(omega)-L-arginino)succinate + AMP + diphosphate + H(+). It functions in the pathway amino-acid biosynthesis; L-arginine biosynthesis; L-arginine from L-ornithine and carbamoyl phosphate: step 2/3. The polypeptide is Argininosuccinate synthase (Clostridium botulinum (strain Okra / Type B1)).